Consider the following 483-residue polypeptide: ATP synthase subunit beta (483 aa).

169–176 contacts ATP; the sequence is GGAGVGKT.

The protein belongs to the ATPase alpha/beta chains family. F-type ATPases have 2 components, CF(1) - the catalytic core - and CF(0) - the membrane proton channel. CF(1) has five subunits: alpha(3), beta(3), gamma(1), delta(1), epsilon(1). CF(0) has three main subunits: a(1), b(2) and c(9-12). The alpha and beta chains form an alternating ring which encloses part of the gamma chain. CF(1) is attached to CF(0) by a central stalk formed by the gamma and epsilon chains, while a peripheral stalk is formed by the delta and b chains.

The protein resides in the cell membrane. It catalyses the reaction ATP + H2O + 4 H(+)(in) = ADP + phosphate + 5 H(+)(out). Produces ATP from ADP in the presence of a proton gradient across the membrane. The catalytic sites are hosted primarily by the beta subunits. The sequence is that of ATP synthase subunit beta from Rhodococcus opacus (strain B4).